We begin with the raw amino-acid sequence, 889 residues long: Cytoplasmic aconitate hydratase (889 aa).

Substrate is bound by residues Gln-86 and 205 to 207; that span reads DSH. [4Fe-4S] cluster-binding residues include Cys-437, Cys-503, and Cys-506. Substrate is bound by residues Arg-536, Arg-541, Arg-699, and 779 to 780; that span reads SR.

Belongs to the aconitase/IPM isomerase family. In terms of assembly, interacts (when associated with the 4Fe-4S) with FBXL5. Interacts with frataxin(81-210). The cofactor is [4Fe-4S] cluster.

The protein localises to the cytoplasm. Its subcellular location is the cytosol. It catalyses the reaction citrate = D-threo-isocitrate. Bifunctional iron sensor that switches between 2 activities depending on iron availability. Iron deprivation, promotes its mRNA binding activity through which it regulates the expression of genes involved in iron uptake, sequestration and utilization. Binds to iron-responsive elements (IRES) in the untranslated region of target mRNAs preventing for instance the translation of ferritin and aminolevulinic acid synthase and stabilizing the transferrin receptor mRNA. Functionally, conversely, when cellular iron levels are high, binds a 4Fe-4S cluster which precludes RNA binding activity and promotes the aconitase activity, the isomerization of citrate to isocitrate via cis-aconitate. This chain is Cytoplasmic aconitate hydratase (ACO1), found in Bos taurus (Bovine).